The chain runs to 264 residues: Splicing factor U2af 38 kDa subunit (264 aa).

A C3H1-type 1 zinc finger spans residues 12–40 (EKDKVNCSFYFKIGACRHGDRCSRIHNKP). Serine 19 carries the phosphoserine modification. The 106-residue stretch at 44-149 (QTVLLQNLYV…RPVYSELSPV (106 aa)) folds into the RRM domain. The C3H1-type 2 zinc-finger motif lies at 151-178 (DFREACCRQYEMGECTRSGFCNFMHLKP). Residues 190–219 (RRRRARSRSRSPGRRRGSRSRSRSPGRRGG) are compositionally biased toward basic residues. The disordered stretch occupies residues 190-264 (RRRRARSRSR…GGGGGGGGRY (75 aa)). Residues 233–251 (NERDNMRGNDRGNDRDRRK) are compositionally biased toward basic and acidic residues. Residues 253–264 (GGGGGGGGGGRY) show a composition bias toward gly residues.

It belongs to the splicing factor SR family. As to quaternary structure, associates with a 65 kDa protein.

It localises to the nucleus. Functionally, necessary for the splicing of pre-mRNA. Binds to the polypyrimidine tract of introns early during spliceosome assembly. The polypeptide is Splicing factor U2af 38 kDa subunit (U2af38) (Drosophila melanogaster (Fruit fly)).